A 478-amino-acid chain; its full sequence is Protein nucleotidyltransferase YdiU (478 aa).

G84, G86, R87, K107, D119, G120, R170, and R177 together coordinate ATP. The Proton acceptor role is filled by D246. N247 and D256 together coordinate Mg(2+). Residue D256 coordinates ATP.

It belongs to the SELO family. The cofactor is Mg(2+). It depends on Mn(2+) as a cofactor.

It catalyses the reaction L-seryl-[protein] + ATP = 3-O-(5'-adenylyl)-L-seryl-[protein] + diphosphate. The catalysed reaction is L-threonyl-[protein] + ATP = 3-O-(5'-adenylyl)-L-threonyl-[protein] + diphosphate. It carries out the reaction L-tyrosyl-[protein] + ATP = O-(5'-adenylyl)-L-tyrosyl-[protein] + diphosphate. The enzyme catalyses L-histidyl-[protein] + UTP = N(tele)-(5'-uridylyl)-L-histidyl-[protein] + diphosphate. It catalyses the reaction L-seryl-[protein] + UTP = O-(5'-uridylyl)-L-seryl-[protein] + diphosphate. The catalysed reaction is L-tyrosyl-[protein] + UTP = O-(5'-uridylyl)-L-tyrosyl-[protein] + diphosphate. Functionally, nucleotidyltransferase involved in the post-translational modification of proteins. It can catalyze the addition of adenosine monophosphate (AMP) or uridine monophosphate (UMP) to a protein, resulting in modifications known as AMPylation and UMPylation. The protein is Protein nucleotidyltransferase YdiU of Escherichia coli (strain ATCC 8739 / DSM 1576 / NBRC 3972 / NCIMB 8545 / WDCM 00012 / Crooks).